Here is a 267-residue protein sequence, read N- to C-terminus: tRNA pseudouridine synthase A (267 aa).

The active-site Nucleophile is the Asp-51. Tyr-109 lines the substrate pocket.

It belongs to the tRNA pseudouridine synthase TruA family.

It catalyses the reaction uridine(38/39/40) in tRNA = pseudouridine(38/39/40) in tRNA. Functionally, formation of pseudouridine at positions 38, 39 and 40 in the anticodon stem and loop of transfer RNAs. This chain is tRNA pseudouridine synthase A, found in Methanothrix thermoacetophila (strain DSM 6194 / JCM 14653 / NBRC 101360 / PT) (Methanosaeta thermophila).